The sequence spans 437 residues: Leucine-rich repeat flightless-interacting protein 2 (437 aa).

The residue at position 18 (Ser18) is a Phosphoserine. Positions 22–49 (EALSNIAREAEARLAAKRAARAEARDIR) form a coiled coil. The span at 33-62 (ARLAAKRAARAEARDIRMRELERQQRESSS) shows a compositional bias: basic and acidic residues. Residues 33–152 (ARLAAKRAAR…DTSLSELRES (120 aa)) are disordered. The span at 63–74 (KDITGTHWSRAS) shows a compositional bias: polar residues. Residues 77–105 (KRRDMMYDSIKDRSSRVSSLLDEKSDKQY) show a composition bias toward basic and acidic residues. The span at 110–139 (TRPSSRNSASATTPLSGNSSRRGSGDTSSL) shows a compositional bias: polar residues. Phosphoserine occurs at positions 114, 117, 125, 129, and 133. Phosphothreonine is present on Thr136. Phosphoserine is present on residues Ser137 and Ser138. 2 coiled-coil regions span residues 143 to 239 (DTSL…LIEK) and 282 to 430 (LDVR…KANR).

Belongs to the LRRFIP family. In terms of assembly, interacts with DVL3 and FLII. Weakly interacts with MYD88 in resting cells. Following LPS-stimulation, the interaction with MYD88 is rapidly enhanced; the complex gradually dissociates to basal levels after 6 hours of stimulation. Interaction with MYD88 is regulated by LPS-induced phosphorylation. In the presence of LPS, competes with FLII for MYD88-binding.

May function as activator of the canonical Wnt signaling pathway, in association with DVL3, upstream of CTNNB1/beta-catenin. Positively regulates Toll-like receptor (TLR) signaling in response to agonist probably by competing with the negative FLII regulator for MYD88-binding. The chain is Leucine-rich repeat flightless-interacting protein 2 (Lrrfip2) from Rattus norvegicus (Rat).